A 483-amino-acid chain; its full sequence is Altronate oxidoreductase (483 aa).

NAD(+) is bound at residue 18–29; it reads IIQFGEGNFLRA.

It belongs to the mannitol dehydrogenase family. UxaB subfamily.

The enzyme catalyses D-altronate + NAD(+) = keto-D-tagaturonate + NADH + H(+). Its pathway is carbohydrate metabolism; pentose and glucuronate interconversion. This chain is Altronate oxidoreductase, found in Escherichia coli O1:K1 / APEC.